A 1059-amino-acid polypeptide reads, in one-letter code: Ceruloplasmin (1059 aa).

The signal sequence occupies residues 1–19; it reads MKFLLLSALLFLHSSLAWT. Plastocyanin-like domains lie at 20–199, 208–356, 369–554, 564–712, 724–894, and 902–1055; these read REKH…LILC, KEEN…VRDC, HVRH…MKIC, RQKD…VNQC, GERT…LIVC, and FNPK…PNQE. 3 residues coordinate Na(+): tyrosine 55, glycine 64, and tyrosine 67. Cu(2+) is bound by residues histidine 120 and histidine 122. Histidine 120 contributes to the O2 binding site. A Ca(2+)-binding site is contributed by lysine 128. N-linked (GlcNAc...) asparagine glycosylation occurs at asparagine 138. Ca(2+) contacts are provided by glutamine 143, aspartate 146, and aspartate 147. Cysteines 173 and 199 form a disulfide. Residues histidine 179 and histidine 181 each coordinate Cu(2+). Histidine 179 provides a ligand contact to O2. An N-linked (GlcNAc...) asparagine glycan is attached at asparagine 226. A Na(+)-binding site is contributed by serine 255. A disulfide bond links cysteine 275 and cysteine 356. The Cu(2+) site is built by histidine 294, cysteine 337, and histidine 342. Asparagine 396 is a glycosylation site (N-linked (GlcNAc...) asparagine). The Na(+) site is built by phenylalanine 407, glycine 416, and tyrosine 419. An intrachain disulfide couples cysteine 528 to cysteine 554. A glycan (N-linked (GlcNAc...) asparagine) is linked at asparagine 582. Serine 611 contacts Na(+). The cysteines at positions 631 and 712 are disulfide-linked. Residues histidine 650, cysteine 693, histidine 698, and methionine 703 each coordinate Cu(2+). Cysteine 693 serves as the catalytic Nucleophile; for glutathione peroxidase activity. Asparagine 756 carries an N-linked (GlcNAc...) asparagine glycan. Na(+) is bound by residues phenylalanine 761, glycine 770, and tyrosine 773. Cysteines 868 and 894 form a disulfide. Asparagine 920 is a glycosylation site (N-linked (GlcNAc...) asparagine). Serine 949 serves as a coordination point for Na(+). Positions 988, 991, 993, 1033, 1034, 1035, 1039, and 1044 each coordinate Cu(2+). O2-binding residues include histidine 991 and histidine 993. Residue histidine 1035 participates in O2 binding.

This sequence belongs to the multicopper oxidase family. As to quaternary structure, found in a complex with MPO and LTF; interacts directly with MPO and LTF, which allows Fe(3+) incorporation into LTF, activation of CP ferroxidase activity and protection of CP antioxidant properties by MPO. It depends on Cu(2+) as a cofactor. In terms of tissue distribution, synthesized in liver and secreted into the plasma. Also choroid plexus, yolk sac, placenta, and testis; not in stomach and small intestine. Fetal lung and liver.

It localises to the secreted. It catalyses the reaction 4 Fe(2+) + O2 + 4 H(+) = 4 Fe(3+) + 2 H2O. It carries out the reaction 4 Cu(+) + O2 + 4 H(+) = 4 Cu(2+) + 2 H2O. The enzyme catalyses a hydroperoxide + 2 glutathione = an alcohol + glutathione disulfide + H2O. The catalysed reaction is 4 nitric oxide + O2 + 2 H2O = 4 nitrite + 4 H(+). It catalyses the reaction 2 glutathione + H2O2 = glutathione disulfide + 2 H2O. Functionally, multifunctional blue, copper-binding (6-7 atoms per molecule) glycoprotein. It has ferroxidase activity oxidizing Fe(2+) to Fe(3+) without releasing radical oxygen species. It is involved in iron transport across the cell membrane. Copper ions provide a large number of enzymatic activites. Oxidizes highly toxic ferrous ions to the ferric state for further incorporation onto apo-transferrins, catalyzes Cu(+) oxidation and promotes the oxidation of biogenic amines such as norepinephrin and serotonin. Provides Cu(2+) ions for the ascorbate-mediated deaminase degradation of the heparan sulfate chains of GPC1. Has glutathione peroxidase-like activity, can remove both hydrogen peroxide and lipid hydroperoxide in the presence of thiols. Also shows NO-oxidase and NO2 synthase activities that determine endocrine NO homeostasis. This chain is Ceruloplasmin (Cp), found in Rattus norvegicus (Rat).